Consider the following 360-residue polypeptide: Protein Wnt-2 (360 aa).

The N-terminal stretch at 1 to 25 is a signal peptide; it reads MNAPLGGIWPWLPLLLTWLTPEVSS. 11 disulfide bridges follow: Cys76–Cys87, Cys127–Cys135, Cys137–Cys157, Cys206–Cys220, Cys208–Cys215, Cys278–Cys309, Cys294–Cys304, Cys308–Cys348, Cys324–Cys339, Cys326–Cys336, and Cys331–Cys332. Residue Ser212 is the site of O-palmitoleoyl serine; by PORCN attachment. N-linked (GlcNAc...) asparagine glycosylation is present at Asn295.

It belongs to the Wnt family. In terms of processing, palmitoleoylation is required for efficient binding to frizzled receptors. Depalmitoleoylation leads to Wnt signaling pathway inhibition.

It localises to the secreted. The protein resides in the extracellular space. Its subcellular location is the extracellular matrix. Its function is as follows. Ligand for members of the frizzled family of seven transmembrane receptors. Functions in the canonical Wnt signaling pathway that results in activation of transcription factors of the TCF/LEF family. Functions as a upstream regulator of FGF10 expression. Plays an important role in embryonic lung development. May contribute to embryonic brain development by regulating the proliferation of dopaminergic precursors and neurons. This is Protein Wnt-2 (WNT2) from Felis catus (Cat).